A 215-amino-acid polypeptide reads, in one-letter code: Phosphoribosylglycinamide formyltransferase (215 aa).

(6R)-10-formyltetrahydrofolate is bound by residues Arg74, Met99–Leu102, and Asn116. The active-site Proton donor is His118.

This sequence belongs to the GART family.

The enzyme catalyses N(1)-(5-phospho-beta-D-ribosyl)glycinamide + (6R)-10-formyltetrahydrofolate = N(2)-formyl-N(1)-(5-phospho-beta-D-ribosyl)glycinamide + (6S)-5,6,7,8-tetrahydrofolate + H(+). It participates in purine metabolism; IMP biosynthesis via de novo pathway; N(2)-formyl-N(1)-(5-phospho-D-ribosyl)glycinamide from N(1)-(5-phospho-D-ribosyl)glycinamide (10-formyl THF route): step 1/1. Functionally, catalyzes the transfer of a formyl group from 10-formyltetrahydrofolate to 5-phospho-ribosyl-glycinamide (GAR), producing 5-phospho-ribosyl-N-formylglycinamide (FGAR) and tetrahydrofolate. In Mycobacterium tuberculosis (strain CDC 1551 / Oshkosh), this protein is Phosphoribosylglycinamide formyltransferase.